The chain runs to 430 residues: Adenylosuccinate synthetase (430 aa).

GTP-binding positions include 13–19 (GDEGKGK) and 41–43 (GHT). The active-site Proton acceptor is aspartate 14. Mg(2+) is bound by residues aspartate 14 and glycine 41. Residues 14–17 (DEGK), 39–42 (NAGH), threonine 130, arginine 144, glutamine 225, threonine 240, and arginine 304 each bind IMP. Catalysis depends on histidine 42, which acts as the Proton donor. 300-306 (STTGRAR) contacts substrate. GTP is bound by residues arginine 306, 332–334 (KLD), and 414–416 (STG).

It belongs to the adenylosuccinate synthetase family. As to quaternary structure, homodimer. Mg(2+) is required as a cofactor.

It is found in the cytoplasm. It carries out the reaction IMP + L-aspartate + GTP = N(6)-(1,2-dicarboxyethyl)-AMP + GDP + phosphate + 2 H(+). It participates in purine metabolism; AMP biosynthesis via de novo pathway; AMP from IMP: step 1/2. Plays an important role in the de novo pathway of purine nucleotide biosynthesis. Catalyzes the first committed step in the biosynthesis of AMP from IMP. The polypeptide is Adenylosuccinate synthetase (Pseudomonas putida (strain W619)).